Reading from the N-terminus, the 426-residue chain is Isocitrate dehydrogenase [NADP] (426 aa).

The D-threo-isocitrate site is built by Ser-123, Asn-125, Arg-129, Arg-139, and Arg-162. Asp-312 contributes to the Mg(2+) binding site. Residues 344 to 350, Asn-357, and Lys-404 each bind NADP(+); that span reads HGTAWDI.

Belongs to the isocitrate and isopropylmalate dehydrogenases family. In terms of assembly, homodimer. Requires Mg(2+) as cofactor. The cofactor is Mn(2+).

It carries out the reaction D-threo-isocitrate + NADP(+) = 2-oxoglutarate + CO2 + NADPH. Its function is as follows. Catalyzes the oxidative decarboxylation of isocitrate to 2-oxoglutarate and carbon dioxide with the concomitant reduction of NADP(+). The chain is Isocitrate dehydrogenase [NADP] (icd) from Aquifex aeolicus (strain VF5).